The primary structure comprises 352 residues: MYFCGVKDRKKDIRALTKEQLQKFFVAEGDKSFRGTQVYEWLWSKAAHSFDDMTNISKETRQMLKDNFVINHIRVDRMQRSSDGTIKNAVKLHDALTVESVLIPTKSRTTACVSSQVGCSLDCQFCATAKLKRMRNLNPDEIYDQVVAIDNESRLYFDRPLSNIVFMGMGEPLMNYNNVMKAVEKITSPEGLGMSPKRITISTSGVPKMIKKLADDEAKIKLAVSLHSARNEVRTQIMPFNETFPLEDLREALEYWYSKTTSRITYEYIVWKDINDTREDAQALVRFCKYVPCKVNLIEYNPIDDGNFQQAAIEATNMYQDMLERNGITVTVRRSRGKDIDAACGQLANKSA.

The active-site Proton acceptor is the E99. Residues 105–339 form the Radical SAM core domain; the sequence is TKSRTTACVS…VTVRRSRGKD (235 aa). A disulfide bond links C112 and C344. The [4Fe-4S] cluster site is built by C119, C123, and C126. Residues 170 to 171, S202, 225 to 227, and N301 contribute to the S-adenosyl-L-methionine site; these read GE and SLH. C344 functions as the S-methylcysteine intermediate in the catalytic mechanism.

Belongs to the radical SAM superfamily. RlmN family. The cofactor is [4Fe-4S] cluster.

Its subcellular location is the cytoplasm. It catalyses the reaction adenosine(2503) in 23S rRNA + 2 reduced [2Fe-2S]-[ferredoxin] + 2 S-adenosyl-L-methionine = 2-methyladenosine(2503) in 23S rRNA + 5'-deoxyadenosine + L-methionine + 2 oxidized [2Fe-2S]-[ferredoxin] + S-adenosyl-L-homocysteine. The enzyme catalyses adenosine(37) in tRNA + 2 reduced [2Fe-2S]-[ferredoxin] + 2 S-adenosyl-L-methionine = 2-methyladenosine(37) in tRNA + 5'-deoxyadenosine + L-methionine + 2 oxidized [2Fe-2S]-[ferredoxin] + S-adenosyl-L-homocysteine. Specifically methylates position 2 of adenine 2503 in 23S rRNA and position 2 of adenine 37 in tRNAs. This Christiangramia forsetii (strain DSM 17595 / CGMCC 1.15422 / KT0803) (Gramella forsetii) protein is Probable dual-specificity RNA methyltransferase RlmN.